A 314-amino-acid polypeptide reads, in one-letter code: DNA-directed RNA polymerase subunit alpha (314 aa).

The tract at residues 1 to 228 (MIEIEKPRIE…EHLNIFVGLT (228 aa)) is alpha N-terminal domain (alpha-NTD). An alpha C-terminal domain (alpha-CTD) region spans residues 245 to 314 (KEKVLEMSIE…DLGLGLRKED (70 aa)).

It belongs to the RNA polymerase alpha chain family. In terms of assembly, homodimer. The RNAP catalytic core consists of 2 alpha, 1 beta, 1 beta' and 1 omega subunit. When a sigma factor is associated with the core the holoenzyme is formed, which can initiate transcription.

It carries out the reaction RNA(n) + a ribonucleoside 5'-triphosphate = RNA(n+1) + diphosphate. Functionally, DNA-dependent RNA polymerase catalyzes the transcription of DNA into RNA using the four ribonucleoside triphosphates as substrates. The protein is DNA-directed RNA polymerase subunit alpha of Staphylococcus haemolyticus (strain JCSC1435).